We begin with the raw amino-acid sequence, 618 residues long: UvrABC system protein C (618 aa).

One can recognise a GIY-YIG domain in the interval 13–92 (DKPGVYLMKN…IKKYRPKYNI (80 aa)). The 36-residue stretch at 204–239 (LDIVENFKLNMEKAAENLEFEKAAMLRDKINIIEKI) folds into the UVR domain.

It belongs to the UvrC family. As to quaternary structure, interacts with UvrB in an incision complex.

The protein localises to the cytoplasm. The UvrABC repair system catalyzes the recognition and processing of DNA lesions. UvrC both incises the 5' and 3' sides of the lesion. The N-terminal half is responsible for the 3' incision and the C-terminal half is responsible for the 5' incision. The chain is UvrABC system protein C from Clostridium botulinum (strain Okra / Type B1).